The following is a 1807-amino-acid chain: Triacetic acid lactone synthase cle1 (1807 aa).

The Starter acyltransferase (SAT) domain maps to 107–280; that stretch reads LAPLTVIIHI…ANVPVNGRYH (174 aa). The Ketosynthase family 3 (KS3) domain occupies 385-795; sequence DTSIAIIGAA…GNNTAIIICQ (411 aa). Residues C540, H675, and H718 each act as for beta-ketoacyl synthase activity in the active site. Positions 919–1176 constitute a Malonyl-CoA:ACP transacylase (MAT) domain; that stretch reads SKAVYDSSYH…LGPCIWLEAG (258 aa). The tract at residues 1272–1398 is N-terminal hotdog fold; sequence PVIDGLISLE…GTVIVDDERT (127 aa). The PKS/mFAS DH domain occupies 1272 to 1573; sequence PVIDGLISLE…FIRTSTSALQ (302 aa). H1304 acts as the Proton acceptor; for dehydratase activity in catalysis. The tract at residues 1416 to 1573 is C-terminal hotdog fold; that stretch reads TVFSAPRGVA…FIRTSTSALQ (158 aa). D1475 serves as the catalytic Proton donor; for dehydratase activity. A Carrier 1 domain is found at 1605–1679; the sequence is ANVWSLTVNL…IICERITAQT (75 aa). S1639 is subject to O-(pantetheine 4'-phosphoryl)serine. Residues 1690–1720 are disordered; it reads GNSTSNTTSSSSQCTPSSSFESDSDTQATEL. The segment covering 1692–1710 has biased composition (low complexity); it reads STSNTTSSSSQCTPSSSFE. Positions 1721–1797 constitute a Carrier 2 domain; that stretch reads SLSAPTMEKV…DLHALVMRRG (77 aa). An O-(pantetheine 4'-phosphoryl)serine modification is found at S1757.

The cofactor is pantetheine 4'-phosphate.

It functions in the pathway secondary metabolite biosynthesis; terpenoid biosynthesis. Its function is as follows. Non-reducing polyketide synthase; part of the cluster A that mediates the biosynthesis of chevalone E and its oxidized derivatives that possess a unique five-membered lactone ring and can synergistically enhance the cytotoxicity of doxorubicin (DOX) in breast cancer cells. Within the pathway, cle1 takes part to the biosynthesis of the molecular scaffold via the synthesis the alpha-pyrone triacetic acid lactone (TAL) from one molecule of acetyl-CoA and two molecules of malonyl-CoA. The molecular scaffold is commonly biosynthesized by a series of enzymes including the non-reducing polyketide synthase (NR-PKS) cle1 that produces the alpha-pyrone triacetic acid lactone (TAL); The membrane-bound prenyltransferase cle5 that accepts TAL as its substrate to perform a C-3 geranylgeranylation reaction, in which the pathway-dedicated GGPS cle6 is required to provide GGPP, the other substrate of cle5; the FAD-dependent monooxygenase Cle3 that forms an (S)-epoxide ring at the terminal olefin of the geranylgeranyl group; and the terpene cyclase Cle7 that catalyzes the cyclization of the prenyl group that yields the pentacyclic pathway intermediate chevalone E. Chevalone E can derivatize into seven new oxidized analogs by the cytochrome P450 monooxygenases cle2 (acting at C-20) and cle4 (acting at C-11 and C-12). The polypeptide is Triacetic acid lactone synthase cle1 (Aspergillus versicolor).